The sequence spans 360 residues: Phosphoserine aminotransferase (360 aa).

R42 lines the L-glutamate pocket. Pyridoxal 5'-phosphate-binding positions include A76–S77, W102, T152, D171, and Q194. K195 is modified (N6-(pyridoxal phosphate)lysine). N236 to T237 is a binding site for pyridoxal 5'-phosphate.

Belongs to the class-V pyridoxal-phosphate-dependent aminotransferase family. SerC subfamily. As to quaternary structure, homodimer. Requires pyridoxal 5'-phosphate as cofactor.

Its subcellular location is the cytoplasm. The catalysed reaction is O-phospho-L-serine + 2-oxoglutarate = 3-phosphooxypyruvate + L-glutamate. It carries out the reaction 4-(phosphooxy)-L-threonine + 2-oxoglutarate = (R)-3-hydroxy-2-oxo-4-phosphooxybutanoate + L-glutamate. It functions in the pathway amino-acid biosynthesis; L-serine biosynthesis; L-serine from 3-phospho-D-glycerate: step 2/3. Catalyzes the reversible conversion of 3-phosphohydroxypyruvate to phosphoserine and of 3-hydroxy-2-oxo-4-phosphonooxybutanoate to phosphohydroxythreonine. The polypeptide is Phosphoserine aminotransferase (Geobacillus kaustophilus (strain HTA426)).